The sequence spans 175 residues: Alpha-crystallin B chain (175 aa).

Methionine 1 is subject to N-acetylmethionine. Phosphoserine is present on serine 19. Serine 41 carries an O-linked (GlcNAc) serine glycan. A phosphoserine mark is found at serine 45 and serine 59. Residues 56 to 164 (RAPSWIDTGL…PERTIPITRE (109 aa)) enclose the sHSP domain. Histidine 83 is a Zn(2+) binding site. The residue at position 92 (lysine 92) is an N6-acetyllysine. Zn(2+) contacts are provided by histidine 104, glutamate 106, histidine 111, and histidine 119. Positions 139-175 (SDGVLTMNGPRKQASGPERTIPITREEKPAVTAAPKK) are disordered. N6-acetyllysine is present on lysine 166. A glycan (O-linked (GlcNAc) threonine) is linked at threonine 170.

This sequence belongs to the small heat shock protein (HSP20) family. In terms of assembly, heteromer composed of three CRYAA and one CRYAB subunits. Aggregates with homologous proteins, including the small heat shock protein HSPB1, to form large heteromeric complexes. Inter-subunit bridging via zinc ions enhances stability, which is crucial as there is no protein turn over in the lens. Interacts with HSPBAP1 and TTN/titin. Interacts with TMEM109; in the cellular response to DNA damage. Interacts with DES; binds rapidly during early stages of DES filament assembly and a reduced binding seen in the later stages. Interacts with ATP6V1A and with MTOR, forming a ternary complex.

It localises to the cytoplasm. It is found in the nucleus. The protein resides in the secreted. The protein localises to the lysosome. May contribute to the transparency and refractive index of the lens. Has chaperone-like activity, preventing aggregation of various proteins under a wide range of stress conditions. In lens epithelial cells, stabilizes the ATP6V1A protein, preventing its degradation by the proteasome. This chain is Alpha-crystallin B chain (CRYAB), found in Ovis aries (Sheep).